A 299-amino-acid chain; its full sequence is ATP phosphoribosyltransferase (299 aa).

Belongs to the ATP phosphoribosyltransferase family. Long subfamily. Equilibrium between an active dimeric form, an inactive hexameric form and higher aggregates. Interconversion between the various forms is largely reversible and is influenced by the natural substrates and inhibitors of the enzyme. It depends on Mg(2+) as a cofactor.

It is found in the cytoplasm. It catalyses the reaction 1-(5-phospho-beta-D-ribosyl)-ATP + diphosphate = 5-phospho-alpha-D-ribose 1-diphosphate + ATP. Its pathway is amino-acid biosynthesis; L-histidine biosynthesis; L-histidine from 5-phospho-alpha-D-ribose 1-diphosphate: step 1/9. Feedback inhibited by histidine. Functionally, catalyzes the condensation of ATP and 5-phosphoribose 1-diphosphate to form N'-(5'-phosphoribosyl)-ATP (PR-ATP). Has a crucial role in the pathway because the rate of histidine biosynthesis seems to be controlled primarily by regulation of HisG enzymatic activity. This Buchnera aphidicola subsp. Baizongia pistaciae (strain Bp) protein is ATP phosphoribosyltransferase.